Reading from the N-terminus, the 422-residue chain is Synaptotagmin-1 (422 aa).

Residues 1–57 (MVSESHHEALAAPPVTTVATVLPSNATEPASPGEGKEDAFSKLKEKFMNELHKIPLP) lie on the Vesicular side of the membrane. A glycan (N-linked (GlcNAc...) asparagine) is linked at N25. The helical transmembrane segment at 58–80 (PWALIAIAIVAVLLVLTCCFCIC) threads the bilayer. 5 S-palmitoyl cysteine lipidation sites follow: C75, C76, C78, C80, and C83. Residues 81–422 (KKCLFKKKNK…EVDAMLAVKK (342 aa)) lie on the Cytoplasmic side of the membrane. The tract at residues 113–142 (TMKDQALKDDDAETGLTDGEEKEEPKEEEK) is disordered. The span at 122 to 134 (DDAETGLTDGEEK) shows a compositional bias: acidic residues. Residue T129 is modified to Phosphothreonine. The phospholipid binding stretch occupies residues 136–382 (EPKEEEKLGK…AIGKVFVGYN (247 aa)). Residues 142 to 261 (KLGKLQYSLD…DFGHVTEEWR (120 aa)) form the C2 1 domain. Residues L172, D173, and D179 each coordinate Ca(2+). Y230 is modified (phosphotyrosine). 6 residues coordinate Ca(2+): D231, F232, D233, S236, K237, and D239. A Phosphoserine modification is found at S265. The C2 2 domain occupies 273–406 (KLGDICFSLR…NPRRPIAQWH (134 aa)). Ca(2+) contacts are provided by D304 and D310. A phosphoserine mark is found at S343 and S345. 3 residues coordinate Ca(2+): D364, D366, and D372.

This sequence belongs to the synaptotagmin family. In terms of assembly, homotetramer. Heterodimer; heterodimerizes with SYT2 in presence of calcium. Interacts with SCAMP5. Interacts with STON2. Forms a complex with SV2B, syntaxin 1 and SNAP25. Interacts with SV2A, SV2B and SV2C. Interacts with RIMS1. Interacts with PRRT2. Interacts with DNAJC5 in a phosphorylation-dependent manner. Interacts (via N-terminus) with RAB3A. Interacts with SYT12. Interacts with calmodulin. Interacts with DNM1 (via C-terminal proline-rich domain (PRD)); this interaction facilitates vesicle fission during clathrin-mediated endocytosis (CME). It depends on Ca(2+) as a cofactor. In terms of processing, glycosylated. Expressed in melanocytes.

The protein resides in the cytoplasmic vesicle. Its subcellular location is the secretory vesicle membrane. It is found in the secretory vesicle. The protein localises to the synaptic vesicle membrane. It localises to the chromaffin granule membrane. The protein resides in the cytoplasm. Functionally, calcium sensor that participates in triggering neurotransmitter release at the synapse. May have a regulatory role in the membrane interactions during trafficking of synaptic vesicles at the active zone of the synapse. It binds acidic phospholipids with a specificity that requires the presence of both an acidic head group and a diacyl backbone. A Ca(2+)-dependent interaction between synaptotagmin and putative receptors for activated protein kinase C has also been reported. It can bind to at least three additional proteins in a Ca(2+)-independent manner; these are neurexins, syntaxin and AP2. Plays a role in dendrite formation by melanocytes. This chain is Synaptotagmin-1, found in Homo sapiens (Human).